The primary structure comprises 412 residues: Hyaluronidase-3 (412 aa).

The N-terminal stretch at 1-22 (MIMHLGLMMVVGLTLCLMHGQA) is a signal peptide. Intrachain disulfides connect C42-C332, C206-C221, C357-C368, C362-C396, and C398-C407. An N-linked (GlcNAc...) asparagine glycan is attached at N69. E129 acts as the Proton donor in catalysis. An N-linked (GlcNAc...) asparagine glycan is attached at N216. An EGF-like domain is found at 353-408 (AAMACSHQRCHGHGRCARKDPGQMEAFLHLQPDDSLGAWNSFRCHCYSGWAGPTCL).

Belongs to the glycosyl hydrolase 56 family. Post-translationally, N-glycosylated. Expressed in testis, epididymal tissue, epididymal luminal fluid (ELF), acrosome-intact (AI) sperm and caput (CAP), corpus (COR) and caudal (CAU) sperm. Higher expression in sperm than testis (at protein level). Liver, kidney, skin, brain, stomach and testis. Expressed mainly in granulosa cells of the ovaries. Expressed in small and large antral follicles. Not present in theca or stroma cells. Expressed in testis and liver. Expressed in testis and CAP, COR, and CAU epididymis tissue.

Its subcellular location is the secreted. The protein resides in the cell membrane. It localises to the cytoplasmic vesicle. The protein localises to the secretory vesicle. It is found in the acrosome. Its subcellular location is the endoplasmic reticulum. The protein resides in the early endosome. The catalysed reaction is Random hydrolysis of (1-&gt;4)-linkages between N-acetyl-beta-D-glucosamine and D-glucuronate residues in hyaluronate.. Facilitates sperm penetration into the layer of cumulus cells surrounding the egg by digesting hyaluronic acid. Involved in induction of the acrosome reaction in the sperm. Involved in follicular atresia, the breakdown of immature ovarian follicles that are not selected to ovulate. Induces ovarian granulosa cell apoptosis, possibly via apoptotic signaling pathway involving CASP8 and CASP3 activation, and poly(ADP-ribose) polymerase (PARP) cleavage. Has no hyaluronidase activity in embryonic fibroblasts in vitro. Has no hyaluronidase activity in granulosa cells in vitro. This Mus musculus (Mouse) protein is Hyaluronidase-3 (Hyal3).